Here is a 120-residue protein sequence, read N- to C-terminus: UPF0145 protein Bcenmc03_5217 (120 aa).

Belongs to the UPF0145 family.

The protein is UPF0145 protein Bcenmc03_5217 of Burkholderia orbicola (strain MC0-3).